A 32-amino-acid chain; its full sequence is Ferredoxin (32 aa).

The 30-residue stretch at 3 to 32 (YKVRLLSEAEGIDVTIDCADDVYILDAAEE) folds into the 2Fe-2S ferredoxin-type domain.

The protein belongs to the 2Fe2S plant-type ferredoxin family. The cofactor is [2Fe-2S] cluster.

It is found in the plastid. It localises to the chloroplast. Functionally, ferredoxins are iron-sulfur proteins that transfer electrons in a wide variety of metabolic reactions. The chain is Ferredoxin from Porphyridium purpureum (Red alga).